The following is a 217-amino-acid chain: Large ribosomal subunit protein uL1 (217 aa).

Ser2 carries the post-translational modification N-acetylserine. A Phosphotyrosine modification is found at Tyr11. An N6-acetyllysine mark is found at Lys91 and Lys106. Lys118 bears the N6-acetyllysine; alternate mark. A Glycyl lysine isopeptide (Lys-Gly) (interchain with G-Cter in SUMO1); alternate cross-link involves residue Lys118. A Glycyl lysine isopeptide (Lys-Gly) (interchain with G-Cter in SUMO2); alternate cross-link involves residue Lys118. Lys161 is covalently cross-linked (Glycyl lysine isopeptide (Lys-Gly) (interchain with G-Cter in SUMO2)).

The protein belongs to the universal ribosomal protein uL1 family. In terms of assembly, component of the large ribosomal subunit.

Its subcellular location is the cytoplasm. Component of the large ribosomal subunit. The ribosome is a large ribonucleoprotein complex responsible for the synthesis of proteins in the cell. The polypeptide is Large ribosomal subunit protein uL1 (Rpl10a) (Mus musculus (Mouse)).